We begin with the raw amino-acid sequence, 546 residues long: Histidine--tRNA ligase, mitochondrial (546 aa).

The N-terminal 20 residues, 1–20 (MLSRSLNKVVTSIKSSSIIR), are a transit peptide targeting the mitochondrion. L-histidine contacts are provided by residues 129-131 (DLT), R156, Q172, D176, R326, and 330-331 (YY).

Belongs to the class-II aminoacyl-tRNA synthetase family.

The protein resides in the cytoplasm. The protein localises to the mitochondrion. It catalyses the reaction tRNA(His) + L-histidine + ATP = L-histidyl-tRNA(His) + AMP + diphosphate + H(+). In terms of biological role, catalyzes the aminoacylation of histidyl-tRNA in both the cytoplasm and the mitochondrion. This is Histidine--tRNA ligase, mitochondrial (HTS1) from Saccharomyces cerevisiae (strain ATCC 204508 / S288c) (Baker's yeast).